Reading from the N-terminus, the 404-residue chain is POU domain, class 2, transcription factor 3L (404 aa).

Disordered regions lie at residues 1–29 and 44–67; these read MNRE…TLDF and TGIP…MTGE. Residues 16–29 show a composition bias toward basic and acidic residues; that stretch reads GHLENDAERDTLDF. One can recognise a POU-specific domain in the interval 187–235; the sequence is QGDVGLAMGKLYGNDFSQTTISRFEALNLSFKNMCKLKPLLEKWLNDAE. The homeobox DNA-binding region spans 259 to 297; sequence KRKKRTSIETNIRLTLEKRFQDNPKPSSEEISMIAEQLV. The disordered stretch occupies residues 346–367; it reads MTVTSSCSPGNSSRPSSPTCGL. Residues 350 to 363 are compositionally biased toward low complexity; the sequence is SSCSPGNSSRPSSP.

This sequence belongs to the POU transcription factor family. Class-2 subfamily.

The protein localises to the nucleus. Its function is as follows. Transcription factor that binds to the octamer motif (5'-ATTTGCAT-3') and regulates cell type-specific differentiation pathways. This chain is POU domain, class 2, transcription factor 3L (pou2f3.L), found in Xenopus laevis (African clawed frog).